Consider the following 62-residue polypeptide: Chromatin protein Cren7 2 (62 aa).

Belongs to the Cren7 family. In terms of assembly, monomer. Methylated at multiple sites, to varying extents.

It is found in the chromosome. The protein resides in the cytoplasm. Its function is as follows. A chromatin protein, binds double-stranded DNA without sequence specificity. Constrains negative DNA supercoils. This is Chromatin protein Cren7 2 (cren7-2) from Hyperthermus butylicus (strain DSM 5456 / JCM 9403 / PLM1-5).